The sequence spans 831 residues: G-type lectin S-receptor-like serine/threonine-protein kinase At1g61390 (831 aa).

Positions 1–42 (MYKLPQRNCADKQEYTVHMRKMGMVIFACLLLLIIFPTFGYA) are cleaved as a signal peptide. The region spanning 43 to 162 (DINTSSPLSI…VSGKTLWKSF (120 aa)) is the Bulb-type lectin domain. Topologically, residues 43–448 (DINTSSPLSI…SSELAGSNRT (406 aa)) are extracellular. N-linked (GlcNAc...) asparagine glycosylation is found at Asn45, Asn71, Asn106, and Asn112. The 37-residue stretch at 298–334 (PTSSCDLYRACGPFGLCVRSRNPKCICLKGFVPKSDD) folds into the EGF-like; atypical domain. Disulfide bonds link Cys302-Cys314 and Cys308-Cys322. N-linked (GlcNAc...) asparagine glycosylation is found at Asn340, Asn356, Asn399, and Asn446. In terms of domain architecture, PAN spans 353–439 (CHTNSSTKTQ…GESLSLRLAS (87 aa)). Cystine bridges form between Cys392–Cys413 and Cys396–Cys402. A helical membrane pass occupies residues 449-469 (KIILGTTVSLSIFVILVFAAY). Topologically, residues 470-831 (KSWRYRTKQN…EITQSVIQGR (362 aa)) are cytoplasmic. Residues 520-803 (FSSSNKLGQG…ELPSPKQPTF (284 aa)) form the Protein kinase domain. ATP contacts are provided by residues 526–534 (LGQGGFGPV) and Lys548. 2 positions are modified to phosphoserine: Ser554 and Ser569. Residues 609-626 (TLKFEIDWQKRFNIIQGV) are caM-binding. Catalysis depends on Asp645, which acts as the Proton acceptor. A phosphoserine mark is found at Ser649 and Ser662. The residue at position 679 (Thr679) is a Phosphothreonine. Ser722 and Ser814 each carry phosphoserine.

Belongs to the protein kinase superfamily. Ser/Thr protein kinase family.

Its subcellular location is the cell membrane. It carries out the reaction L-seryl-[protein] + ATP = O-phospho-L-seryl-[protein] + ADP + H(+). It catalyses the reaction L-threonyl-[protein] + ATP = O-phospho-L-threonyl-[protein] + ADP + H(+). This is G-type lectin S-receptor-like serine/threonine-protein kinase At1g61390 from Arabidopsis thaliana (Mouse-ear cress).